The primary structure comprises 522 residues: Peptide methionine sulfoxide reductase MsrA/MsrB (522 aa).

The 158-residue stretch at 17 to 174 (LALGACSPKI…ALALIRDPNA (158 aa)) folds into the Thioredoxin domain. Cys-68 and Cys-71 are disulfide-bonded. The interval 199 to 354 (RTIYLAGGCF…PNGYCHIDIR (156 aa)) is peptide methionine sulfoxide reductase A. Cys-207 is a catalytic residue. Residues 383–506 (DAELKRTLTE…NGASLKFIPL (124 aa)) enclose the MsrB domain. A disulfide bond links Cys-440 and Cys-495. Cys-495 acts as the Nucleophile in catalysis.

In the N-terminal section; belongs to the thioredoxin family. The protein in the central section; belongs to the MsrA Met sulfoxide reductase family. It in the C-terminal section; belongs to the MsrB Met sulfoxide reductase family.

The enzyme catalyses L-methionyl-[protein] + [thioredoxin]-disulfide + H2O = L-methionyl-(S)-S-oxide-[protein] + [thioredoxin]-dithiol. It carries out the reaction [thioredoxin]-disulfide + L-methionine + H2O = L-methionine (S)-S-oxide + [thioredoxin]-dithiol. The catalysed reaction is L-methionyl-[protein] + [thioredoxin]-disulfide + H2O = L-methionyl-(R)-S-oxide-[protein] + [thioredoxin]-dithiol. Has an important function as a repair enzyme for proteins that have been inactivated by oxidation. Catalyzes the reversible oxidation-reduction of methionine sulfoxide in proteins to methionine. The protein is Peptide methionine sulfoxide reductase MsrA/MsrB (msrAB) of Neisseria meningitidis serogroup B (strain ATCC BAA-335 / MC58).